The chain runs to 451 residues: Probable multidrug resistance protein NorM (451 aa).

The next 10 helical transmembrane spans lie at 44 to 66, 92 to 109, 130 to 147, 162 to 179, 186 to 208, 247 to 269, 282 to 304, 319 to 341, 391 to 413, and 423 to 445; these read IAAI…GLLL, YWLA…LWNS, YIRI…FQVI, VIGL…YTLI, FNYG…FIAM, GFPI…LLIA, ALNI…SIRL, IILS…IILF, IIFI…FLAL, and AIGF…LFRI.

It belongs to the multi antimicrobial extrusion (MATE) (TC 2.A.66.1) family.

The protein resides in the cell membrane. Multidrug efflux pump. The protein is Probable multidrug resistance protein NorM (norM) of Buchnera aphidicola subsp. Baizongia pistaciae (strain Bp).